A 316-amino-acid chain; its full sequence is Ribosomal RNA large subunit methyltransferase F (316 aa).

It belongs to the methyltransferase superfamily. METTL16/RlmF family.

It is found in the cytoplasm. It carries out the reaction adenosine(1618) in 23S rRNA + S-adenosyl-L-methionine = N(6)-methyladenosine(1618) in 23S rRNA + S-adenosyl-L-homocysteine + H(+). Functionally, specifically methylates the adenine in position 1618 of 23S rRNA. This is Ribosomal RNA large subunit methyltransferase F from Pseudomonas putida (strain GB-1).